A 195-amino-acid polypeptide reads, in one-letter code: NADH dehydrogenase [ubiquinone] iron-sulfur protein 3 (195 aa).

This sequence belongs to the complex I 30 kDa subunit family. In terms of assembly, complex I is composed of about 45 different subunits. This is a component of the iron-sulfur (IP) fragment of the enzyme.

Its subcellular location is the mitochondrion inner membrane. It catalyses the reaction a ubiquinone + NADH + 5 H(+)(in) = a ubiquinol + NAD(+) + 4 H(+)(out). Its function is as follows. Core subunit of the mitochondrial membrane respiratory chain NADH dehydrogenase (Complex I) that is believed to belong to the minimal assembly required for catalysis. Complex I functions in the transfer of electrons from NADH to the respiratory chain. The immediate electron acceptor for the enzyme is believed to be ubiquinone. The protein is NADH dehydrogenase [ubiquinone] iron-sulfur protein 3 (NAD9) of Marchantia polymorpha (Common liverwort).